We begin with the raw amino-acid sequence, 185 residues long: Ribosome-recycling factor (185 aa).

The protein belongs to the RRF family.

The protein resides in the cytoplasm. Its function is as follows. Responsible for the release of ribosomes from messenger RNA at the termination of protein biosynthesis. May increase the efficiency of translation by recycling ribosomes from one round of translation to another. In terms of biological role, plays a role in sporulation. This chain is Ribosome-recycling factor, found in Bacillus subtilis (strain 168).